We begin with the raw amino-acid sequence, 83 residues long: Putative membrane protein insertion efficiency factor (83 aa).

It belongs to the UPF0161 family.

The protein resides in the cell membrane. Its function is as follows. Could be involved in insertion of integral membrane proteins into the membrane. This chain is Putative membrane protein insertion efficiency factor, found in Streptococcus thermophilus (strain ATCC BAA-250 / LMG 18311).